The sequence spans 589 residues: Serine/threonine-protein kinase STE7 homolog (589 aa).

The span at 1–18 (MTRTTRIDTQEATKHKDL) shows a compositional bias: basic and acidic residues. 2 disordered regions span residues 1 to 162 (MTRT…DPDN) and 185 to 233 (RQHY…ASSQ). Over residues 24–33 (PLSLSSNPNP) the composition is skewed to low complexity. Polar residues predominate over residues 57–69 (VKSTSGSLRSSDM). Over residues 92–121 (PTASSSATSTPTSNITGSSSASSIQFAQKS) the composition is skewed to low complexity. Polar residues-rich tracts occupy residues 127 to 136 (IVSQTLSRPS) and 144 to 162 (SGYSSLNVNQSNRNVDPDN). Positions 185 to 203 (RQHYQNSHHHLPTTNRKRQ) are enriched in basic residues. Residues 206-220 (ISSISPTKSSAASSS) are compositionally biased toward low complexity. Residues 221–233 (LEPQIQSLPASSQ) are compositionally biased toward polar residues. Residues 249 to 565 (LLTLKQLGSG…QLLEDKEHFF (317 aa)) form the Protein kinase domain. ATP contacts are provided by residues 255–263 (LGSGNSGSV) and Lys-278. Residue Asp-374 is the Proton acceptor of the active site. Ser-402 is subject to Phosphoserine. The residue at position 408 (Thr-408) is a Phosphothreonine. Residues 473–499 (IAAERNGQNSPSRSRKNKQKGNGYNSY) form a disordered region.

The protein belongs to the protein kinase superfamily. STE Ser/Thr protein kinase family. MAP kinase kinase subfamily.

The enzyme catalyses L-seryl-[protein] + ATP = O-phospho-L-seryl-[protein] + ADP + H(+). It catalyses the reaction L-threonyl-[protein] + ATP = O-phospho-L-threonyl-[protein] + ADP + H(+). The catalysed reaction is L-tyrosyl-[protein] + ATP = O-phospho-L-tyrosyl-[protein] + ADP + H(+). This chain is Serine/threonine-protein kinase STE7 homolog (HST7), found in Candida albicans (strain SC5314 / ATCC MYA-2876) (Yeast).